The chain runs to 53 residues: uncharacterized protein (53 aa).

It localises to the plastid. It is found in the chloroplast. This is an uncharacterized protein from Guillardia theta (Cryptophyte).